The sequence spans 592 residues: Ichor (592 aa).

Residues 114-123 (NNNYMQSAYH) show a composition bias toward polar residues. Disordered stretches follow at residues 114–156 (NNNY…VSSS), 343–377 (LQNRLQNGPPNGNSSGGGGGANQGAGIKGDPQAPT), 416–439 (LSNPTNNQATGNLHQQGGYSMQAS), and 459–527 (HTTT…DLSG). A compositionally biased stretch (low complexity) spans 124 to 148 (PQNQSNPTSTTQSNGGSNSNSNNSN). The span at 356-369 (SSGGGGGANQGAGI) shows a compositional bias: gly residues. The segment covering 459 to 469 (HTTTASTTGSE) has biased composition (polar residues). Residues 488–500 (QQQQQQQQQQQQQ) are compositionally biased toward low complexity. Residues 507 to 524 (PTTPQMSAISPSGFSASD) are compositionally biased toward polar residues. 2 C2H2-type zinc fingers span residues 536–558 (HRCSICNRGFLNKSNIKVHLRTH) and 564–586 (FRCDVCAKAFRQKAHLLKHQQIH).

Its subcellular location is the nucleus. Transcriptional activator. In tracheal terminal cells, regulates the transcription of factors involved in the formation of a mature apical extracellular matrix (aECM) which is essential for the integrity and shape of seamless tubes. The sequence is that of Ichor from Drosophila melanogaster (Fruit fly).